Here is a 374-residue protein sequence, read N- to C-terminus: Probable quinol oxidase subunit 2 (374 aa).

An N-terminal signal peptide occupies residues 1–19 (MSKFKSLLLLFGTLILLSG). A lipid anchor (N-palmitoyl cysteine) is attached at Cys-20. Cys-20 is lipidated: S-diacylglycerol cysteine. 2 consecutive transmembrane segments (helical) span residues 43–63 (SIIF…IFIF) and 82–102 (IETI…IPTV). The tract at residues 317 to 374 (ERHGMKPMILGNNEKYDNEFKKEEDHNSKEMEKISKGAKDENASKLHKKEHDDHGGGH) is disordered. Residues 330 to 374 (EKYDNEFKKEEDHNSKEMEKISKGAKDENASKLHKKEHDDHGGGH) show a composition bias toward basic and acidic residues.

Belongs to the cytochrome c oxidase subunit 2 family.

The protein resides in the cell membrane. It carries out the reaction 2 a quinol + O2 = 2 a quinone + 2 H2O. In terms of biological role, catalyzes quinol oxidation with the concomitant reduction of oxygen to water. Subunit II transfers the electrons from a quinol to the binuclear center of the catalytic subunit I. The sequence is that of Probable quinol oxidase subunit 2 (qoxA) from Staphylococcus epidermidis (strain ATCC 12228 / FDA PCI 1200).